The sequence spans 196 residues: MIASVRGEVIDIALDHAVIEAAGVGYKVMATPSTLATLRRGTESRLVTAMIVREDSMTLYGFADADARDLFGTLLGVSGVGPKIALATLAVYDAPTLRQALADGDVTALTRVPGIGKRGAERMVLELRDKIGPVTTGAGVTAVGGHAVRGPVVEALVGLGFAAKQAEEACDKVLAADPDATTSSALRAALSMLGKK.

The domain I stretch occupies residues 1-63; it reads MIASVRGEVI…EDSMTLYGFA (63 aa). Residues 64–142 are domain II; it reads DADARDLFGT…PVTTGAGVTA (79 aa). A flexible linker region spans residues 143–151; the sequence is VGGHAVRGP. The segment at 151-196 is domain III; the sequence is PVVEALVGLGFAAKQAEEACDKVLAADPDATTSSALRAALSMLGKK.

It belongs to the RuvA family. Homotetramer. Forms an RuvA(8)-RuvB(12)-Holliday junction (HJ) complex. HJ DNA is sandwiched between 2 RuvA tetramers; dsDNA enters through RuvA and exits via RuvB. An RuvB hexamer assembles on each DNA strand where it exits the tetramer. Each RuvB hexamer is contacted by two RuvA subunits (via domain III) on 2 adjacent RuvB subunits; this complex drives branch migration. In the full resolvosome a probable DNA-RuvA(4)-RuvB(12)-RuvC(2) complex forms which resolves the HJ.

Its subcellular location is the cytoplasm. The RuvA-RuvB-RuvC complex processes Holliday junction (HJ) DNA during genetic recombination and DNA repair, while the RuvA-RuvB complex plays an important role in the rescue of blocked DNA replication forks via replication fork reversal (RFR). RuvA specifically binds to HJ cruciform DNA, conferring on it an open structure. The RuvB hexamer acts as an ATP-dependent pump, pulling dsDNA into and through the RuvAB complex. HJ branch migration allows RuvC to scan DNA until it finds its consensus sequence, where it cleaves and resolves the cruciform DNA. In Mycobacterium sp. (strain JLS), this protein is Holliday junction branch migration complex subunit RuvA.